The primary structure comprises 670 residues: Transcription factor Ken 2 (670 aa).

Residues 108 to 176 form the BTB domain; the sequence is TDLLLICDGK…LYSGQVYVRS (69 aa). 2 disordered regions span residues 200–288 and 307–470; these read SDGS…DRDR and NNHP…SDDA. Residues 218-230 show a composition bias toward polar residues; it reads NRNTEGITGSSVV. Over residues 325–338 the composition is skewed to basic residues; that stretch reads HHLHHHHHHHHRQL. Gly residues-rich tracts occupy residues 351-368 and 389-400; these read GGGS…GESG and SGGGGAGSGRRS. Residues 407 to 419 are compositionally biased toward acidic residues; sequence EPAEDDEDYELDV. Polar residues predominate over residues 451 to 464; the sequence is SDPVNLSIVKQQQD. The C2H2-type 1; degenerate zinc-finger motif lies at 586–594; that stretch reads NLKTHLRVH. 2 C2H2-type zinc fingers span residues 600–623 and 636–658; these read FACR…CSVH and YTCC…LSGH.

The protein localises to the nucleus. Transcription factor required for terminalia development. Negative regulator of the JAK/STAT pathway: represses JAK/STAT-dependent expression of ventral veins lacking (vvl) in the posterior spiracles. This Culex quinquefasciatus (Southern house mosquito) protein is Transcription factor Ken 2.